Here is a 426-residue protein sequence, read N- to C-terminus: Phosphomethylpyrimidine synthase (426 aa).

Substrate contacts are provided by residues Met94, Tyr123, His162, 184–186 (SRG), 225–228 (NGMR), and Glu264. Residue His268 participates in Zn(2+) binding. Substrate is bound at residue Tyr291. Position 332 (His332) interacts with Zn(2+). 3 residues coordinate [4Fe-4S] cluster: Cys406, Cys409, and Cys413.

This sequence belongs to the ThiC family. [4Fe-4S] cluster serves as cofactor.

The enzyme catalyses 5-amino-1-(5-phospho-beta-D-ribosyl)imidazole + S-adenosyl-L-methionine = 4-amino-2-methyl-5-(phosphooxymethyl)pyrimidine + CO + 5'-deoxyadenosine + formate + L-methionine + 3 H(+). The protein operates within cofactor biosynthesis; thiamine diphosphate biosynthesis. Catalyzes the synthesis of the hydroxymethylpyrimidine phosphate (HMP-P) moiety of thiamine from aminoimidazole ribotide (AIR) in a radical S-adenosyl-L-methionine (SAM)-dependent reaction. This Methanospirillum hungatei JF-1 (strain ATCC 27890 / DSM 864 / NBRC 100397 / JF-1) protein is Phosphomethylpyrimidine synthase.